Here is a 507-residue protein sequence, read N- to C-terminus: Rhomboid protease GluP (507 aa).

The next 5 helical transmembrane spans lie at 179–199 (FTYL…INGG), 229–249 (IVLH…WSVG), 261–281 (FLLI…VFSP), 283–303 (PSAG…YVAL), and 312–332 (TIGT…FAVS). Ser-288 acts as the Nucleophile in catalysis. The active-site Charge relay system is the His-339. 2 consecutive transmembrane segments (helical) span residues 340-360 (IGGL…KAGA) and 365-385 (LLSA…GLHS). TPR repeat units lie at residues 424–457 (ADLL…EPKD) and 458–491 (HASY…KPKE).

Belongs to the peptidase S54 family.

The protein resides in the cell membrane. The enzyme catalyses Cleaves type-1 transmembrane domains using a catalytic dyad composed of serine and histidine that are contributed by different transmembrane domains.. With respect to regulation, inhibited by dichloroisocoumarin (DCI) and N-p-tosyl-L-phenylalanine chloromethyl ketone (TPCK), but not by other serine protease inhibitors such as sulfonyl fluoride PMSF and 4-(2-aminoethyl)benzenesulfonyl fluoride (AEBSF). Rhomboid-type serine protease that catalyzes intramembrane proteolysis. Important for normal cell division and sporulation. May act as a glucose exporter. The chain is Rhomboid protease GluP (gluP) from Bacillus subtilis (strain 168).